The primary structure comprises 312 residues: MSDLQGGYKRGELTVHHDPSVLTRVSKALRGVGRQVALVPTMGALHTGHLELVRQAKLTGAVVIVSIFVNPLQFGAGEDLDAYPRTLDADLELLREAGVELAFVPTAATMYPAGPRTTIHPGPLGAELEGVSRPTHFAGMLTVVAKLLQIAAPNVAYFGEKDYQQLTLIRQMVTDLNFDVRIFGVPTVREHDGLALSSRNRYLDEAQRSAATALSAALIAGAHAAAGGAEAILATAREVLASVPEVEVDYLEVRGVDLGPAPERGDGRLLVAAKVGTTRLIDNVGVAVGTGFLERDAEPPSDASAADELLSR.

Residue 42–49 (MGALHTGH) participates in ATP binding. His-49 functions as the Proton donor in the catalytic mechanism. Gln-73 is a binding site for (R)-pantoate. Gln-73 provides a ligand contact to beta-alanine. Residue 159–162 (GEKD) participates in ATP binding. Position 165 (Gln-165) interacts with (R)-pantoate. ATP-binding positions include Val-188 and 196–199 (LSSR).

The protein belongs to the pantothenate synthetase family. Homodimer.

The protein localises to the cytoplasm. It catalyses the reaction (R)-pantoate + beta-alanine + ATP = (R)-pantothenate + AMP + diphosphate + H(+). It participates in cofactor biosynthesis; (R)-pantothenate biosynthesis; (R)-pantothenate from (R)-pantoate and beta-alanine: step 1/1. Catalyzes the condensation of pantoate with beta-alanine in an ATP-dependent reaction via a pantoyl-adenylate intermediate. The chain is Pantothenate synthetase from Rhodococcus jostii (strain RHA1).